We begin with the raw amino-acid sequence, 430 residues long: PCI domain-containing protein 2 homolog (430 aa).

Residues 243–424 (ITYRFFNGRL…ALVVSPTNPF (182 aa)) enclose the PCI domain.

The protein belongs to the CSN12 family.

This is PCI domain-containing protein 2 homolog (pcid2) from Dictyostelium discoideum (Social amoeba).